Here is a 195-residue protein sequence, read N- to C-terminus: Putative nucleotidase BH1399 (195 aa).

It belongs to the 5'(3')-deoxyribonucleotidase family.

This is Putative nucleotidase BH1399 from Halalkalibacterium halodurans (strain ATCC BAA-125 / DSM 18197 / FERM 7344 / JCM 9153 / C-125) (Bacillus halodurans).